We begin with the raw amino-acid sequence, 202 residues long: MASSTRLTIIQSSFVSARTRLNYVSKTNHSGFACRSLSKPRNLSLSVYSMGSSSSSPKPDNVQEAEKNEFASLSENEWKKRLTPEQYYITRQKGTERAFTGEYWNSKTPGVYNCVCCDTPLFDSSTKFDSGTGWPSYYQPIGNNVKTKLDLSIIFMPRQEVVCAVCNAHLGHVFDDGPRPTGKRYCLNSAALKLNALEKTRD.

The N-terminal 63 residues, 1 to 63 (MASSTRLTII…SSSPKPDNVQ (63 aa)), are a transit peptide targeting the chloroplast. The tract at residues 48–67 (YSMGSSSSSPKPDNVQEAEK) is disordered. Positions 75–197 (ENEWKKRLTP…NSAALKLNAL (123 aa)) constitute a MsrB domain. Residues cysteine 114, cysteine 117, cysteine 163, and cysteine 166 each contribute to the Zn(2+) site. The Nucleophile role is filled by cysteine 186.

It belongs to the MsrB Met sulfoxide reductase family. The cofactor is Zn(2+). In terms of tissue distribution, expressed at low levels in stems, leaves, floral buds, flowers and siliques (at protein level).

It is found in the plastid. The protein localises to the chloroplast. It carries out the reaction L-methionyl-[protein] + [thioredoxin]-disulfide + H2O = L-methionyl-(R)-S-oxide-[protein] + [thioredoxin]-dithiol. Catalyzes the reduction of methionine sulfoxide (MetSO) to methionine in proteins. Specifically reduces the MetSO R-enantiomer. Plays a protective role against oxidative stress by restoring activity to proteins that have been inactivated by methionine oxidation. May play an essential function in association with MSRB2 in maintaining vegetative growth during environmental constraints, through the preservation of photosynthetic antennae. MSRB1 and MSRB2 account for most of the leaf peptide MSR capacity. In Arabidopsis thaliana (Mouse-ear cress), this protein is Peptide methionine sulfoxide reductase B1, chloroplastic.